A 199-amino-acid polypeptide reads, in one-letter code: MTSTPLPRLILGSSSPYRRELLERLRLTFEVAVPDINETPLAGESPEATALRLSLNKAQAIAQRHPDALIIGSDQVLTLDGRQMGKPGSHDKAREQLRLMRGRTATFHSALCLLDGRTGQSQLADVQTRVTMRDLTDAEIDAYLRLEKPYDVAGSAKSEGLGIALLSRVESDDPTALVGLPLIALTSMLRQSGYPFFAA.

D74 (proton acceptor) is an active-site residue.

Belongs to the Maf family. YceF subfamily. Requires a divalent metal cation as cofactor.

It localises to the cytoplasm. It catalyses the reaction N(7)-methyl-GTP + H2O = N(7)-methyl-GMP + diphosphate + H(+). Nucleoside triphosphate pyrophosphatase that hydrolyzes 7-methyl-GTP (m(7)GTP). May have a dual role in cell division arrest and in preventing the incorporation of modified nucleotides into cellular nucleic acids. This Cupriavidus pinatubonensis (strain JMP 134 / LMG 1197) (Cupriavidus necator (strain JMP 134)) protein is 7-methyl-GTP pyrophosphatase.